We begin with the raw amino-acid sequence, 243 residues long: MSSESEKGQERLIQAAKLFSCHIQDLVSFINRFIELFNLTMKTQILPMSLNEESCIKDFLEQMIENFKEMQLMADVKQKEMQKEPLCSKVVTEVTSAGGKCADLSPHHMAEEMLKTIQTSGAALVPKTSHILGSLETSLSLLMQFPIMGLRLSDFHSEETKEQPDATTSEKSRSPECPKTTKEEALKRLQDMLCPENAHKPLETAAEELEQFIKTMDMTLQVLRKSIKTMEGNSCVLTQVQGK.

Positions 157–181 (SEETKEQPDATTSEKSRSPECPKTT) are disordered.

This is an uncharacterized protein from Rattus norvegicus (Rat).